A 154-amino-acid chain; its full sequence is Urease accessory protein UreE (154 aa).

Belongs to the UreE family.

Its subcellular location is the cytoplasm. In terms of biological role, involved in urease metallocenter assembly. Binds nickel. Probably functions as a nickel donor during metallocenter assembly. The chain is Urease accessory protein UreE from Rhizobium meliloti (strain 1021) (Ensifer meliloti).